The following is an 807-amino-acid chain: Spondin-1 (807 aa).

An N-terminal signal peptide occupies residues 1-28 (MRLSPAPLKLSRTPALLALALPLAAALA). The 166-residue stretch at 29–194 (FSDETLDKVP…DSTFDGVTDK (166 aa)) folds into the Reelin domain. Intrachain disulfides connect C44–C128, C156–C182, C199–C336, C200–C340, C202–C415, C443–C480, C454–C489, C459–C494, C502–C538, C513–C517, C548–C554, C559–C595, C570–C574, C605–C610, C615–C650, C626–C630, and C660–C665. Positions 195-388 (PILDCCACGT…LTSLDHPQSP (194 aa)) constitute a Spondin domain. A glycan (N-linked (GlcNAc...) asparagine) is linked at N214. 3 residues coordinate Ca(2+): D325, D354, and D358. TSP type-1 domains lie at 442-495 (TCIY…PGCS), 501-555 (TCTM…EECS), 558-611 (SCLM…PECH), 614-666 (PCLL…PECP), 668-721 (DCEL…RKCL), and 754-806 (GCRM…NVHP). W448 carries a C-linked (Man) tryptophan glycan. A glycan (C-linked (Man) tryptophan; partial) is linked at W451. Residue W507 is glycosylated (C-linked (Man) tryptophan). C-linked (Man) tryptophan; partial glycosylation occurs at W510. Residue W564 is glycosylated (C-linked (Man) tryptophan). C-linked (Man) tryptophan; partial glycosylation occurs at W620. The C-linked (Man) tryptophan glycan is linked to W623. The C-linked (Man) tryptophan glycan is linked to W674. N-linked (GlcNAc...) asparagine glycosylation occurs at N681.

As to quaternary structure, binds to the central extracellular domain of APP and inhibits beta-secretase cleavage of APP. In terms of tissue distribution, highest expression in lung, lower expression in brain, heart, kidney, liver and testis, and lowest expression in pancreas, skeletal muscle and ovary. Not expressed in spleen.

It is found in the secreted. The protein resides in the extracellular space. It localises to the extracellular matrix. In terms of biological role, cell adhesion protein that promotes the attachment of spinal cord and sensory neuron cells and the outgrowth of neurites in vitro. May contribute to the growth and guidance of axons in both the spinal cord and the PNS. Major factor for vascular smooth muscle cell. This chain is Spondin-1 (SPON1), found in Homo sapiens (Human).